Consider the following 687-residue polypeptide: Ribosomal RNA processing protein 1 homolog (687 aa).

Residues 288-298 (DEEDDEVNAEE) are compositionally biased toward acidic residues. Disordered regions lie at residues 288–312 (DEED…RAGN) and 463–624 (VKEA…GSGK). Composition is skewed to basic and acidic residues over residues 463–488 (VKEA…DQTK), 497–520 (PKND…EEPA), and 527–543 (HSKT…DEQP). Over residues 554-564 (KAKPTPKTKAA) the composition is skewed to low complexity. Over residues 596-608 (KQANSKLPQSTPK) the composition is skewed to polar residues. Residues threonine 617 and threonine 620 each carry the phosphothreonine modification. Position 622 is a phosphoserine (serine 622).

Belongs to the RRP1 family.

It localises to the nucleus. Functionally, may be involved in the generation of 28S rRNA. This chain is Ribosomal RNA processing protein 1 homolog (Nnp-1), found in Drosophila melanogaster (Fruit fly).